A 496-amino-acid chain; its full sequence is MELVVKSVSPETLKTATLVVTVGESRVLAGAARTVDILSGGAVSLILKRGDLAGKVGQSLLLHNLPNIKAERVLLVGTGKEDELSDRQLKKIVGAALTCLKGLGGTDAAIALDDLSVKNRDTYGMARLLVEALADGEYVFDRFKTQKAEVRALKKITLLTDKVKAADVERASTHAQAIATGMALTRDLGNLPPNICHPTYLGEEAKALGKAHKNLKVEVHDEKKLADLGMGSFLAVAQGSAQPPRLIVMNYQGGKKGDQPFVLVGKGITFDTGGISIKPASGMDEMKFDMCGAASVFGTLRAVLELKLPINLVCILACAENMPSGTATRPGDIVTTMSGQTVEILNTDAEGRLVLCDALTYAERFKPQAVIDIATLTGACVVALGGHTSGLLGNNDALINQLLDAGKQADDRAWQLPLFDEYQEQLDSPFADIANIGGPKGGTITAACFLSRFTKAYHWAHLDIAGTAWLSGGKEKGATGRPVPLLTQYLLDRAGV.

Residues K266 and D271 each contribute to the Mn(2+) site. K278 is an active-site residue. 3 residues coordinate Mn(2+): D289, D348, and E350. R352 is an active-site residue.

This sequence belongs to the peptidase M17 family. Mn(2+) serves as cofactor.

It is found in the cytoplasm. The enzyme catalyses Release of an N-terminal amino acid, Xaa-|-Yaa-, in which Xaa is preferably Leu, but may be other amino acids including Pro although not Arg or Lys, and Yaa may be Pro. Amino acid amides and methyl esters are also readily hydrolyzed, but rates on arylamides are exceedingly low.. The catalysed reaction is Release of an N-terminal amino acid, preferentially leucine, but not glutamic or aspartic acids.. Functionally, presumably involved in the processing and regular turnover of intracellular proteins. Catalyzes the removal of unsubstituted N-terminal amino acids from various peptides. This Pseudomonas syringae pv. syringae (strain B728a) protein is Probable cytosol aminopeptidase.